The chain runs to 284 residues: 4-diphosphocytidyl-2-C-methyl-D-erythritol kinase (284 aa).

K9 is a catalytic residue. Residue 92 to 102 (PMGGGIGGGSS) participates in ATP binding. The active site involves D134.

This sequence belongs to the GHMP kinase family. IspE subfamily.

It catalyses the reaction 4-CDP-2-C-methyl-D-erythritol + ATP = 4-CDP-2-C-methyl-D-erythritol 2-phosphate + ADP + H(+). It participates in isoprenoid biosynthesis; isopentenyl diphosphate biosynthesis via DXP pathway; isopentenyl diphosphate from 1-deoxy-D-xylulose 5-phosphate: step 3/6. Functionally, catalyzes the phosphorylation of the position 2 hydroxy group of 4-diphosphocytidyl-2C-methyl-D-erythritol. This Stutzerimonas stutzeri (strain A1501) (Pseudomonas stutzeri) protein is 4-diphosphocytidyl-2-C-methyl-D-erythritol kinase.